Here is a 110-residue protein sequence, read N- to C-terminus: uncharacterized protein (110 aa).

Positions 1–72 (MWRSSNQRGV…NHRNIHLRNP (72 aa)) are disordered. The segment covering 10–23 (VSRRRDKSMRKYTR) has biased composition (basic residues). The span at 48-57 (KNTYTGNISS) shows a compositional bias: polar residues.

This is an uncharacterized protein from Human herpesvirus 6A (strain Uganda-1102) (HHV-6 variant A).